A 71-amino-acid chain; its full sequence is uncharacterized protein (71 aa).

Positions 20 to 32 are enriched in polar residues; it reads SSGRRQLTATQPR. The disordered stretch occupies residues 20–46; the sequence is SSGRRQLTATQPRSDPESQRGRTSSNR.

This is an uncharacterized protein from Rhizobium leguminosarum.